A 1001-amino-acid chain; its full sequence is RNA-binding protein 12B (1001 aa).

3 positions are modified to phosphoserine: Ser-98, Ser-101, and Ser-112. Lys-114 participates in a covalent cross-link: Glycyl lysine isopeptide (Lys-Gly) (interchain with G-Cter in SUMO2). Residues 119–128 show a composition bias toward polar residues; the sequence is NSGYGSSINQ. The interval 119–147 is disordered; that stretch reads NSGYGSSINQDAGFHTNGTGHGNLRPRKT. A Glycyl lysine isopeptide (Lys-Gly) (interchain with G-Cter in SUMO2) cross-link involves residue Lys-151. The RRM 1 domain occupies 155–230; it reads PYLFLRGLPY…RFIEVMQGSE (76 aa). The segment covering 247–262 has biased composition (basic and acidic residues); that stretch reads LRRSEEHSPPRGINDR. The interval 247–278 is disordered; sequence LRRSEEHSPPRGINDRHFRKRSHSKSPRRTRS. Residues Ser-250 and Ser-254 each carry the phosphoserine modification. A compositionally biased stretch (basic residues) spans 263-278; the sequence is HFRKRSHSKSPRRTRS. Thr-276 carries the post-translational modification Phosphothreonine. Phosphoserine occurs at positions 278, 280, 292, and 294. The region spanning 284–360 is the RRM 2 domain; it reads FYVHLKNLSL…RPVHIDPISR (77 aa). N6-acetyllysine is present on Lys-319. Lys-335 is covalently cross-linked (Glycyl lysine isopeptide (Lys-Gly) (interchain with G-Cter in SUMO2)). Ser-377 carries the phosphoserine modification. Positions 400-477 constitute an RRM 3 domain; sequence LCIYIRNFPF…TEVLLRLISE (78 aa). Residues Lys-514 and Lys-541 each participate in a glycyl lysine isopeptide (Lys-Gly) (interchain with G-Cter in SUMO2) cross-link. Residues 544 to 587 form a disordered region; the sequence is QRDFRQPDRHPPEDFRHSSEDFRFPPEDFRHSPEDFRRPREEDF. Residues Ser-575, Ser-591, and Ser-638 each carry the phosphoserine modification. Residues 631–881 are compositionally biased toward basic and acidic residues; that stretch reads LEEDFRRSPT…FRSPPDDFRS (251 aa). Residues 631–882 form a disordered region; the sequence is LEEDFRRSPT…RSPPDDFRSH (252 aa). Residue Thr-640 is modified to Phosphothreonine. Ser-710 and Ser-718 each carry phosphoserine. A Glycyl lysine isopeptide (Lys-Gly) (interchain with G-Cter in SUMO2) cross-link involves residue Lys-895. The region spanning 925–1001 is the RRM 4 domain; that stretch reads TPIKIMNLPF…GPRKVKLTLL (77 aa).

The polypeptide is RNA-binding protein 12B (RBM12B) (Homo sapiens (Human)).